The primary structure comprises 371 residues: Putative glutamate--cysteine ligase 2 (371 aa).

This sequence belongs to the glutamate--cysteine ligase type 2 family. YbdK subfamily.

The catalysed reaction is L-cysteine + L-glutamate + ATP = gamma-L-glutamyl-L-cysteine + ADP + phosphate + H(+). ATP-dependent carboxylate-amine ligase which exhibits weak glutamate--cysteine ligase activity. In Cupriavidus pinatubonensis (strain JMP 134 / LMG 1197) (Cupriavidus necator (strain JMP 134)), this protein is Putative glutamate--cysteine ligase 2.